Reading from the N-terminus, the 326-residue chain is Glycerol-3-phosphate dehydrogenase [NAD(P)+] (326 aa).

Residues tryptophan 13, arginine 33, and lysine 107 each contribute to the NADPH site. Sn-glycerol 3-phosphate contacts are provided by lysine 107, glycine 135, and serine 137. Alanine 139 contributes to the NADPH binding site. Lysine 190, aspartate 243, serine 253, arginine 254, and asparagine 255 together coordinate sn-glycerol 3-phosphate. Catalysis depends on lysine 190, which acts as the Proton acceptor. An NADPH-binding site is contributed by arginine 254. 2 residues coordinate NADPH: leucine 273 and glutamate 275.

The protein belongs to the NAD-dependent glycerol-3-phosphate dehydrogenase family.

Its subcellular location is the cytoplasm. The catalysed reaction is sn-glycerol 3-phosphate + NAD(+) = dihydroxyacetone phosphate + NADH + H(+). The enzyme catalyses sn-glycerol 3-phosphate + NADP(+) = dihydroxyacetone phosphate + NADPH + H(+). The protein operates within membrane lipid metabolism; glycerophospholipid metabolism. Its function is as follows. Catalyzes the reduction of the glycolytic intermediate dihydroxyacetone phosphate (DHAP) to sn-glycerol 3-phosphate (G3P), the key precursor for phospholipid synthesis. This Brucella ovis (strain ATCC 25840 / 63/290 / NCTC 10512) protein is Glycerol-3-phosphate dehydrogenase [NAD(P)+].